Consider the following 776-residue polypeptide: Ion-translocating oxidoreductase complex subunit C (776 aa).

4Fe-4S ferredoxin-type domains lie at 368 to 397 (MGAPQEEQHCIRCSACADACPADLLPQQLY) and 407 to 436 (KATAHNLADCIECGACAYVCPSNIPLVQYF). Positions 377, 380, 383, 387, 416, 419, 422, and 426 each coordinate [4Fe-4S] cluster. 5 stretches are compositionally biased toward basic and acidic residues: residues 534–543 (ARARQAEKVQ), 597–611 (ADEKPAEPIDPRKAA), 633–647 (ADEKPAEPIDPRKAA), 669–683 (ADEKPAEPIDPRKAA), and 705–719 (ADEKPAEPIDPRKAT). Residues 534–754 (ARARQAEKVQ…ENEAEDPRKA (221 aa)) form a disordered region. Residues 721-743 (EAAIARAKARKAAQAGERAQAAN) show a composition bias toward low complexity.

This sequence belongs to the 4Fe4S bacterial-type ferredoxin family. RnfC subfamily. The complex is composed of six subunits: RnfA, RnfB, RnfC, RnfD, RnfE and RnfG. The cofactor is [4Fe-4S] cluster.

The protein resides in the cell inner membrane. Part of a membrane-bound complex that couples electron transfer with translocation of ions across the membrane. The chain is Ion-translocating oxidoreductase complex subunit C from Cronobacter sakazakii (strain ATCC BAA-894) (Enterobacter sakazakii).